A 169-amino-acid chain; its full sequence is Small ribosomal subunit protein uS5 (169 aa).

An S5 DRBM domain is found at 15–79 (LKEQVVAINR…EAAKKNLRRI (65 aa)).

This sequence belongs to the universal ribosomal protein uS5 family. In terms of assembly, part of the 30S ribosomal subunit. Contacts proteins S4 and S8.

Its function is as follows. With S4 and S12 plays an important role in translational accuracy. Functionally, located at the back of the 30S subunit body where it stabilizes the conformation of the head with respect to the body. The sequence is that of Small ribosomal subunit protein uS5 from Solibacter usitatus (strain Ellin6076).